A 443-amino-acid chain; its full sequence is Threonine/serine transporter TdcC (443 aa).

11 consecutive transmembrane segments (helical) span residues 22 to 42, 44 to 64, 97 to 117, 140 to 160, 163 to 183, 207 to 227, 259 to 279, 319 to 339, 366 to 386, 389 to 409, and 423 to 443; these read TTWTLGLFGTAIGAGVLFFPI, AGFGGLIPILLMLVLAYPIAF, GVVITFLYFFAICPLLWIYGV, FVALFLLLLMAFVIWFGKDLM, VMSYLVWPFIASLVLISLSLI, ILVTVWLGISIMVFSFNFSPI, ASMLMVAVVMFFAFSCLFTLS, ASIIALVAIFKSFFGHYLGTL, ISMIFIMGSTWVVAYANPNIL, IEAMGAPIIASLLCLLPMYAI, and DNVFVTLIGLLTILNIVYKLF.

This sequence belongs to the amino acid/polyamine transporter 2 family. SdaC/TdcC subfamily.

The protein localises to the cell inner membrane. It catalyses the reaction L-threonine(in) + H(+)(in) = L-threonine(out) + H(+)(out). The enzyme catalyses L-serine(in) + H(+)(in) = L-serine(out) + H(+)(out). Involved in the import of threonine and serine into the cell, with the concomitant import of a proton (symport system). This chain is Threonine/serine transporter TdcC, found in Salmonella paratyphi B (strain ATCC BAA-1250 / SPB7).